The chain runs to 305 residues: RNA-binding protein with serine-rich domain 1 (305 aa).

Over residues 1–10 (MDLSGVKKKS) the composition is skewed to basic residues. Residues 1 to 161 (MDLSGVKKKS…KRRSPSPKPT (161 aa)) are necessary for interaction with SRP54, nuclear localization and exon-skipping. The disordered stretch occupies residues 1-170 (MDLSGVKKKS…TKVHIGRLTR (170 aa)). The tract at residues 1–220 (MDLSGVKKKS…ENPDEAEKAL (220 aa)) is necessary for interaction with the cleaved p110 isoform of CDC2L1. Glycyl lysine isopeptide (Lys-Gly) (interchain with G-Cter in SUMO2) cross-links involve residues Lys-7 and Lys-15. Over residues 33 to 59 (DRSDEKSKDRSKDKGTTKESSEKDRGR) the composition is skewed to basic and acidic residues. Position 53 is a phosphoserine (Ser-53). Residues 68-126 (ASSGSSSTRSRSSSTSSSGSSTSTGSSSGSSSSSASSRSGSSSTSRSSSSSSSSGSPSP) show a composition bias toward low complexity. The segment at 69–121 (SSGSSSTRSRSSSTSSSGSSTSTGSSSGSSSSSASSRSGSSSTSRSSSSSSSS) is necessary for interactions with UPF2 and UPF3B and UPF2-dependent NMD. Basic residues-rich tracts occupy residues 127–143 (SRRR…KSKP) and 151–167 (RKRR…HIGR). Residues Ser-155 and Ser-157 each carry the phosphoserine modification. The tract at residues 156–242 (PSPKPTKVHI…ITATAVLAPW (87 aa)) is necessary for interaction with PNN and exon-skipping. The segment at 159 to 244 (KPTKVHIGRL…ATAVLAPWPR (86 aa)) is interaction with SAP18 and ACIN1. Thr-161 bears the Phosphothreonine mark. An RRM domain is found at 161-240 (TKVHIGRLTR…QEITATAVLA (80 aa)). Residue Lys-218 is modified to N6-acetyllysine. The segment at 238 to 305 (VLAPWPRPPP…RSRSSSNSSR (68 aa)) is necessary for interaction with TRA2B, nuclear localization and exon-skipping. Residues 240–305 (APWPRPPPRR…RSRSSSNSSR (66 aa)) are disordered. Positions 242 to 262 (WPRPPPRRFSPPRRMLPPPPM) are enriched in pro residues. The segment covering 266-298 (SPPRMRRRSRSPRRRSPVRRRSRSPGRRRHRSR) has biased composition (basic residues).

Belongs to the splicing factor SR family. In terms of assembly, found in mRNA splicing-dependent exon junction complexes (EJC). Found in a post-splicing complex with NXF1, RBM8A, UPF1, UPF2, UPF3A, UPF3B and RNPS1. Component of the heterotrimeric ASAP (apoptosis- and splicing-associated protein) and PSAP complexes consisting of RNPS1, SAP18 and either ACIN1 or PNN, respectively; the ASAP and PSAP complexes probably are formed mutually exclusive. Component of the active spliceosome. Associates with polysomes. Interacts with the cleaved p110 isoform of CDC2L1, CSNK2A1, PNN, SART3, SRP54, SRRM1 and TRA2B/SFRS10. Phosphorylated on one or more of the four Ser/Thr residues (Ser-43, Thr-49, Ser-52 or Ser-53). Ser-53 phosphorylation site is important for splicing and translation stimulation activity in vitro.

It localises to the nucleus. The protein localises to the nucleus speckle. Its subcellular location is the cytoplasm. Functionally, part of pre- and post-splicing multiprotein mRNP complexes. Auxiliary component of the splicing-dependent multiprotein exon junction complex (EJC) deposited at splice junction on mRNAs. The EJC is a dynamic structure consisting of core proteins and several peripheral nuclear and cytoplasmic associated factors that join the complex only transiently either during EJC assembly or during subsequent mRNA metabolism. Component of the ASAP and PSAP complexes which bind RNA in a sequence-independent manner and are proposed to be recruited to the EJC prior to or during the splicing process and to regulate specific excision of introns in specific transcription subsets. The ASAP complex can inhibit RNA processing during in vitro splicing reactions. The ASAP complex promotes apoptosis and is disassembled after induction of apoptosis. Enhances the formation of the ATP-dependent A complex of the spliceosome. Involved in both constitutive splicing and, in association with SRP54 and TRA2B/SFRS10, in distinctive modulation of alternative splicing in a substrate-dependent manner. Involved in the splicing modulation of BCL2L1/Bcl-X (and probably other apoptotic genes); specifically inhibits formation of proapoptotic isoforms such as Bcl-X(S); the activity is different from the established EJC assembly and function. Participates in mRNA 3'-end cleavage. Involved in UPF2-dependent nonsense-mediated decay (NMD) of mRNAs containing premature stop codons. Also mediates increase of mRNA abundance and translational efficiency. Binds spliced mRNA 20-25 nt upstream of exon-exon junctions. This Rattus norvegicus (Rat) protein is RNA-binding protein with serine-rich domain 1 (Rnps1).